Reading from the N-terminus, the 173-residue chain is Calmodulin-like protein 11 (173 aa).

Positions 1-26 are enriched in low complexity; that stretch reads MEEIQQQQQQQQQQQQQQQQQQQQQQ. A disordered region spans residues 1–27; the sequence is MEEIQQQQQQQQQQQQQQQQQQQQQQE. EF-hand domains are found at residues 31 to 66, 67 to 102, 104 to 139, and 140 to 173; these read EQIMEFKEAFCLFDKDGDGCITADELATVIRSLDQN, PTEQELQDMITEIDSDGNGTIEFSEFLNLMANQLQE, DADEELKEAFKVFDKDQNGYISASELRHVMINLGEK, and LTDEEVDQMIKEADLDGDGQVNYDEFVRMMMING. Residues D44, D46, D48, C50, E55, D80, D82, N84, T86, E91, D117, D119, N121, Y123, E128, D153, D155, D157, Q159, and E164 each coordinate Ca(2+).

The protein belongs to the calmodulin family.

Potential calcium sensor. In Arabidopsis thaliana (Mouse-ear cress), this protein is Calmodulin-like protein 11 (CML11).